Consider the following 268-residue polypeptide: Tryptophan synthase alpha chain (268 aa).

Catalysis depends on proton acceptor residues Glu49 and Asp60.

The protein belongs to the TrpA family. In terms of assembly, tetramer of two alpha and two beta chains.

The enzyme catalyses (1S,2R)-1-C-(indol-3-yl)glycerol 3-phosphate + L-serine = D-glyceraldehyde 3-phosphate + L-tryptophan + H2O. The protein operates within amino-acid biosynthesis; L-tryptophan biosynthesis; L-tryptophan from chorismate: step 5/5. Its function is as follows. The alpha subunit is responsible for the aldol cleavage of indoleglycerol phosphate to indole and glyceraldehyde 3-phosphate. This chain is Tryptophan synthase alpha chain, found in Shigella sonnei (strain Ss046).